A 508-amino-acid polypeptide reads, in one-letter code: Protein FAM217A (508 aa).

This sequence belongs to the FAM217 family.

The sequence is that of Protein FAM217A (FAM217A) from Homo sapiens (Human).